Reading from the N-terminus, the 835-residue chain is Protein translocase subunit SecA (835 aa).

Residues Gln-85, 103–107 (GEGKT), and Asp-492 each bind ATP. Zn(2+) contacts are provided by Cys-819, Cys-821, Cys-830, and Cys-831.

Belongs to the SecA family. In terms of assembly, monomer and homodimer. Part of the essential Sec protein translocation apparatus which comprises SecA, SecYEG and auxiliary proteins SecDF. Other proteins may also be involved. It depends on Zn(2+) as a cofactor.

It localises to the cell membrane. The protein localises to the cytoplasm. The catalysed reaction is ATP + H2O + cellular proteinSide 1 = ADP + phosphate + cellular proteinSide 2.. In terms of biological role, part of the Sec protein translocase complex. Interacts with the SecYEG preprotein conducting channel. Has a central role in coupling the hydrolysis of ATP to the transfer of proteins into and across the cell membrane, serving as an ATP-driven molecular motor driving the stepwise translocation of polypeptide chains across the membrane. The chain is Protein translocase subunit SecA from Clostridium botulinum (strain ATCC 19397 / Type A).